Here is a 1048-residue protein sequence, read N- to C-terminus: Ceruloplasmin (1048 aa).

A signal peptide spans 1–19 (MKIFLLCIFLILCGTSVWA). Plastocyanin-like domains are found at residues 20–200 (KDKH…LIHC), 209–357 (KEKN…VQDC), and 370–554 (NVRH…MKIC). 3 residues coordinate Na(+): Tyr55, Gly64, and Tyr67. 2 residues coordinate Cu(2+): His120 and His122. An O2-binding site is contributed by His120. Ca(2+) is bound at residue Lys128. Asn138 carries an N-linked (GlcNAc...) asparagine glycan. Positions 143, 146, and 147 each coordinate Ca(2+). Cys174 and Cys200 are oxidised to a cystine. His180 and His182 together coordinate Cu(2+). His180 serves as a coordination point for O2. An N-linked (GlcNAc...) asparagine glycan is attached at Asn227. Ser256 lines the Na(+) pocket. The cysteines at positions 276 and 357 are disulfide-linked. His295, Cys338, and His343 together coordinate Cu(2+). Na(+) is bound by residues Phe408, Gly417, and Tyr420. A disulfide bridge links Cys530 with Cys554. Residues Asn556 and Asn582 are each glycosylated (N-linked (GlcNAc...) asparagine). One can recognise a Plastocyanin-like 4 domain in the interval 564–712 (RLKNVDKEFY…MKQKYTVSQC (149 aa)). Ser611 provides a ligand contact to Na(+). A disulfide bond links Cys631 and Cys712. Cu(2+) contacts are provided by His650, Cys693, His698, and Met703. The active-site Nucleophile; for glutathione peroxidase activity is Cys693. A Phosphoserine modification is found at Ser716. Plastocyanin-like domains are found at residues 724–894 (GERT…LIVC) and 902–1044 (SNPI…PNEE). Asn756 is a glycosylation site (N-linked (GlcNAc...) asparagine). Na(+) contacts are provided by Phe761, Gly770, and Tyr773. A disulfide bridge links Cys868 with Cys894. Asn920 is a glycosylation site (N-linked (GlcNAc...) asparagine). Residue Ser949 coordinates Na(+). 8 residues coordinate Cu(2+): His977, His980, His982, His1022, Cys1023, His1024, His1028, and Met1033. O2-binding residues include His980 and His982. Residue His1024 participates in O2 binding.

The protein belongs to the multicopper oxidase family. As to quaternary structure, found in a complex with MPO and LTF; interacts directly with MPO and LTF, which allows Fe(3+) incorporation into LTF, activation of CP ferroxidase activity and protection of CP antioxidant properties by MPO. Cu(2+) serves as cofactor. As to expression, expressed by the liver and secreted in plasma. Also expressed in the hypothalamus, spleen and uterus. No expression in the cortex, heart, intestine or kidney.

It localises to the secreted. It catalyses the reaction 4 Fe(2+) + O2 + 4 H(+) = 4 Fe(3+) + 2 H2O. It carries out the reaction 4 Cu(+) + O2 + 4 H(+) = 4 Cu(2+) + 2 H2O. The catalysed reaction is a hydroperoxide + 2 glutathione = an alcohol + glutathione disulfide + H2O. The enzyme catalyses 4 nitric oxide + O2 + 2 H2O = 4 nitrite + 4 H(+). It catalyses the reaction 2 glutathione + H2O2 = glutathione disulfide + 2 H2O. Multifunctional blue, copper-binding (6-7 atoms per molecule) glycoprotein. It has ferroxidase activity oxidizing Fe(2+) to Fe(3+) without releasing radical oxygen species. It is involved in iron transport across the cell membrane. Copper ions provide a large number of enzymatic activites. Oxidizes highly toxic ferrous ions to the ferric state for further incorporation onto apo-transferrins, catalyzes Cu(+) oxidation and promotes the oxidation of biogenic amines such as norepinephrin and serotonin. Provides Cu(2+) ions for the ascorbate-mediated deaminase degradation of the heparan sulfate chains of GPC1. Has glutathione peroxidase-like activity, can remove both hydrogen peroxide and lipid hydroperoxide in the presence of thiols. Also shows NO-oxidase and NO2 synthase activities that determine endocrine NO homeostasis. In Ovis aries (Sheep), this protein is Ceruloplasmin (CP).